Here is a 720-residue protein sequence, read N- to C-terminus: ATP-dependent DNA helicase Hel308 (720 aa).

Residues serine 23, glutamine 28, and isoleucine 46–threonine 53 each bind ATP. Residues lysine 33–aspartate 197 form the Helicase ATP-binding domain. The DEAH box signature appears at aspartate 145–histidine 148. Residues leucine 229 to isoleucine 422 enclose the Helicase C-terminal domain.

It belongs to the helicase family. Hel308 subfamily. Monomer. Interacts with PCNA. It depends on Mg(2+) as a cofactor. The cofactor is Zn(2+).

It carries out the reaction Couples ATP hydrolysis with the unwinding of duplex DNA by translocating in the 3'-5' direction.. It catalyses the reaction ATP + H2O = ADP + phosphate + H(+). In terms of biological role, DNA-dependent ATPase and 3'-5' DNA helicase that may be involved in repair of stalled replication forks. Unwinds the lagging strand from forked DNA structures in a 3'-5' direction. PCNA, the DNA polymerase sliding clamp subunit, stimulates the helicase activity, and may alter substrate specificity. Unwinds branched DNA (Holliday junctions) in an ATP-dependent fashion; ss- and dsDNA stimulate ATPase to the greatest extent, although it preferentially binds DNA with a single-stranded region. Processes a RecA-mediated recombination intermediate between gapped circular and homologous linear dsDNA. The sequence is that of ATP-dependent DNA helicase Hel308 from Pyrococcus furiosus (strain ATCC 43587 / DSM 3638 / JCM 8422 / Vc1).